Consider the following 231-residue polypeptide: Small ribosomal subunit protein uS3 (231 aa).

The KH type-2 domain maps to 38-106 (IRVYLKNRLK…KTFVNIMEIK (69 aa)).

Belongs to the universal ribosomal protein uS3 family. As to quaternary structure, part of the 30S ribosomal subunit. Forms a tight complex with proteins S10 and S14.

Binds the lower part of the 30S subunit head. Binds mRNA in the 70S ribosome, positioning it for translation. The protein is Small ribosomal subunit protein uS3 of Endomicrobium trichonymphae.